A 270-amino-acid chain; its full sequence is 5-deoxy-glucuronate isomerase (270 aa).

It belongs to the isomerase IolB family.

The enzyme catalyses 5-deoxy-D-glucuronate = 5-dehydro-2-deoxy-D-gluconate. The protein operates within polyol metabolism; myo-inositol degradation into acetyl-CoA; acetyl-CoA from myo-inositol: step 4/7. Functionally, involved in the isomerization of 5-deoxy-glucuronate (5DG) to 5-dehydro-2-deoxy-D-gluconate (DKG or 2-deoxy-5-keto-D-gluconate). The chain is 5-deoxy-glucuronate isomerase from Halalkalibacterium halodurans (strain ATCC BAA-125 / DSM 18197 / FERM 7344 / JCM 9153 / C-125) (Bacillus halodurans).